A 445-amino-acid polypeptide reads, in one-letter code: Homogentisate 1,2-dioxygenase (445 aa).

Lys98 carries the post-translational modification N6-acetyllysine. Residues His335, Glu341, and His371 each contribute to the Fe cation site. Lys414 is subject to N6-succinyllysine.

This sequence belongs to the homogentisate dioxygenase family. As to quaternary structure, homohexamer arranged as a dimer of trimers. Fe cation serves as cofactor. As to expression, highest expression in the prostate, small intestine, colon, kidney and liver.

It carries out the reaction homogentisate + O2 = 4-maleylacetoacetate + H(+). The protein operates within amino-acid degradation; L-phenylalanine degradation; acetoacetate and fumarate from L-phenylalanine: step 4/6. Functionally, catalyzes the conversion of homogentisate to maleylacetoacetate. The sequence is that of Homogentisate 1,2-dioxygenase (HGD) from Homo sapiens (Human).